A 1280-amino-acid chain; its full sequence is MWQILLAISIFSLSKLSNAQQQPKVAPPQITNFLAEDKVAPEEVKFRDTDVWQLVLPCRATGSNPLKWVWKHNNAEINKNKFIFDRDWELLSDGTLRARGLNISDRGTYQCFVEDTVTKVSTFSRKLRVEVTAVGDFKSHKDFTSSVKLGEPLNVECPPRGPSFGVTFAWTSKKARSIQFPISNRVAIDPSTGNLHIMYITEEDVSTFNDLEGIRCTISAANTFYSSGALTLQIIPGKEIKLSSPSFTSSTSSPNENAVEGRRKDLYCEATARPPPKLVWKKNGVELKSGIDFIEIPEAFEGRLLSITSVKESLHETTFTCEASNNQTIASGPAQQNFVLNVEVAPRWASKPPDSLKEIPISSNGNLSCDVYAQPEPEIKWYRDGREITQSSSKVEVSGSKLLFKDTTLDEAGIYQCSAENVHGMIVSSTYVKVLAIAPSFKNGFGPFYLFQDSEGRLKCDPEAAPRPSTFKWFDENGAEIKSGNGYTIEEDGTLVITKVERSQHAGKFSCYAKNFLGNATAEGTATVYDRTRIVRGPSDLSVNEGTRVDLRCEAVADSSLELHYTWKRDDATIEYNRRVQWLKDQNVLTIADLTVEDAGIYTCVAYTPQPKYSEAKASAIVNIAGAPFPPTNLMLSSECQNRNTTLSWVTGESNNASILYFLIERKSQYADDFWQVIANVTNPNATSHPLVKLAGNADLAFRIRAVNRFGPSRPSEPTGSFCRTIRAVPEKWPDNFRGVPGKAEELTIAWTAMRRVEWNGPGLYYKLWYRRVNSGDALVEVRREASSDSFVVPDAGYYRQWEFQIQAINEVGEGPKSPLVKQFSGQDPPTGKPEDVTVGTITARSVELSWKKVTFTRGSVDGYRIYFWGESRVSAKRRRRAIPGYASVTNVTGVNTERYTVTGLKPYTNYKFVITAYNSGGNGPESDQVAADTDEAEPGPPSDVQVFVFAKYILVTWQPPSEPNGVITNYRVGTETYTGSQPTDVTVNMEETGVEARRKLLRDLVPETNYVVEMQAATSKGWGTSFRKTEKTVAWAAPAKPEKPIVEGTAVDEVRVDYKFGLGGGYTHDFLVMFRKKIEGQEFQNTSWVDHFQQQSIIIGNLDPELYQFKTVARNDYPSQENPQESPASDITEARPRPGISNVGKRVSTPIYQSAWFIALLVLIALLLLVLLTFVLYTRHQGAKYLVGKREKKRAAALIDREHFDEEEGSFSNNGRADHPPPYPSQGSLPRGADSDRDSLDDYGEGPQFNEDGSFIEEYGDEKKAPPEEKDPSSLATFV.

A signal peptide spans 1–19; that stretch reads MWQILLAISIFSLSKLSNA. At 20–1156 the chain is on the extracellular side; the sequence is QQQPKVAPPQ…RVSTPIYQSA (1137 aa). 5 cysteine pairs are disulfide-bonded: cysteine 58–cysteine 111, cysteine 268–cysteine 321, cysteine 369–cysteine 417, cysteine 460–cysteine 511, and cysteine 553–cysteine 604. Fibronectin type-III domains follow at residues 628–722, 730–824, 830–933, 939–1033, and 1039–1131; these read PFPP…TGSF, PEKW…VKQF, PTGK…VAAD, PGPP…TEKT, and PAKP…PASD. The span at 1118–1130 shows a compositional bias: polar residues; sequence YPSQENPQESPAS. Positions 1118–1144 are disordered; that stretch reads YPSQENPQESPASDITEARPRPGISNV. A helical transmembrane segment spans residues 1157-1177; it reads WFIALLVLIALLLLVLLTFVL. The Cytoplasmic portion of the chain corresponds to 1178–1280; that stretch reads YTRHQGAKYL…KDPSSLATFV (103 aa). Residues 1206–1280 form a disordered region; it reads DEEEGSFSNN…KDPSSLATFV (75 aa). Residues 1262–1273 show a composition bias toward basic and acidic residues; sequence DEKKAPPEEKDP.

In terms of tissue distribution, component of the acid-insoluble organic matrix of the aragonitic skeleton (at protein level).

It localises to the membrane. The polypeptide is Fibronectin type III domain-containing protein (Acropora millepora (Staghorn coral)).